The primary structure comprises 286 residues: MESAVSEPGLLEAIWRDFVLGVVQGLTEFLPISSTAHLKIVPVLAGWGDPGVSVTAVIQLGSIVAVIAYFRADLAAVLRGISGAVRRGQWREPEARLGIAMTIGTLPILFAGLAIKLYWPGYETSPLRSVPAIAGVSILMALLLALAERFGPRSKQLDQVQGRDGLLVGLAQVLALIPGVSRSGSTLTASLFDSWKRPDAARFSFLLGIPAITIAGLVELKDAFTEPSAGGVLPLMVGIVSAAVVSWLAIDWLLKFLQRHSTWVFVIYRLLFGILLLAWWAGSGSN.

Helical transmembrane passes span 50–70 (PGVS…IAYF), 97–117 (LGIA…AIKL), 127–147 (LRSV…LALA), 165–185 (GLLV…RSGS), 200–220 (AARF…LVEL), 230–250 (GGVL…WLAI), and 262–282 (TWVF…WWAG).

Belongs to the UppP family.

Its subcellular location is the cell inner membrane. The enzyme catalyses di-trans,octa-cis-undecaprenyl diphosphate + H2O = di-trans,octa-cis-undecaprenyl phosphate + phosphate + H(+). Its function is as follows. Catalyzes the dephosphorylation of undecaprenyl diphosphate (UPP). Confers resistance to bacitracin. The sequence is that of Undecaprenyl-diphosphatase from Synechococcus sp. (strain WH7803).